Reading from the N-terminus, the 247-residue chain is Large ribosomal subunit protein uL30 (247 aa).

M1 is modified (N-acetylmethionine). 4 consecutive repeat copies span residues 7–17 (KKKVPAVPETL), 18–29 (KKKRRNFAELKI), 30–41 (KRLRKKFAQKML), and 42–53 (RKARRKLIYEKA). The tract at residues 7-53 (KKKVPAVPETLKKKRRNFAELKIKRLRKKFAQKMLRKARRKLIYEKA) is 4 X 12 AA tandem repeats. Position 16 is a phosphothreonine (T16). The residue at position 123 (K123) is an N6-acetyllysine. An N6-succinyllysine modification is found at K126. Y138 is subject to Phosphotyrosine.

It belongs to the universal ribosomal protein uL30 family. As to quaternary structure, component of the large ribosomal subunit. Homodimer. Interacts with DHX33.

Its subcellular location is the cytoplasm. Component of the large ribosomal subunit. The ribosome is a large ribonucleoprotein complex responsible for the synthesis of proteins in the cell. Binds to G-rich structures in 28S rRNA and in mRNAs. Plays a regulatory role in the translation apparatus; inhibits cell-free translation of mRNAs. This Macaca fascicularis (Crab-eating macaque) protein is Large ribosomal subunit protein uL30 (RPL7).